Here is a 351-residue protein sequence, read N- to C-terminus: Trans-enoyl reductase grgB (351 aa).

The Enoyl reductase (ER) domain maps to 10–346 (GAESGGYRLA…GKVHAKKLVV (337 aa)). NADP(+) contacts are provided by residues 161–164 (ATAT), 184–187 (SPAN), Tyr-202, 249–250 (LE), and 339–340 (VH).

Belongs to the zinc-containing alcohol dehydrogenase family.

It participates in secondary metabolite biosynthesis. Its function is as follows. Trans-enoyl reductase; part of the gene cluster that mediates the biosynthesis of gregatin A, a fungal polyketide featuring an alkylated furanone core. The PKS grgA synthesizes C11 and C4 polyketide chains in the presence and absence of the trans-enoyl reductase grgB, respectively. The polyketide transferase grgF is then responsible for the fusion of the two carbon chains to produce the furanone skeleton of gregatin A. Next, the cytochrome P450 monooxygenase grgG accepts performs the oxidative cyclization to furnish the gregatin scaffold and leads to the formation of desmethylgregatin A. Finally, the O-methyltransferase grgD methylates the carboxyl group of desmethylgregatin A to provide gregatin A. This chain is Trans-enoyl reductase grgB, found in Penicillium sp.